The primary structure comprises 171 residues: bZIP transcription factor 2 (171 aa).

The segment covering 1 to 24 (MASSSSTYRSSSSSDGGNNNPSDS) has biased composition (low complexity). A disordered region spans residues 1 to 54 (MASSSSTYRSSSSSDGGNNNPSDSVVTVDERKRKRMLSNRESARRSRMRKQKHV). In terms of domain architecture, bZIP spans 29–92 (DERKRKRMLS…MKIQAENSVL (64 aa)). The tract at residues 31–52 (RKRKRMLSNRESARRSRMRKQK) is basic motif. The interval 57-71 (LTAQINQLSNDNRQI) is leucine-zipper.

Forms heterodimers with BZIP9, BZIP10, BZIP25 and BZIP63. Component of a ternary complex composed of BZIP2-BZIP63 heterodimer and KIN10.

It localises to the nucleus. In terms of biological role, transcription factor that binds to specific DNA sequences in target gene promoters. BZIP2-BZIP63-KIN10 complex binds to the ETFQO promoter to up-regulate its transcription. This is bZIP transcription factor 2 from Arabidopsis thaliana (Mouse-ear cress).